A 442-amino-acid chain; its full sequence is Probable glycine dehydrogenase (decarboxylating) subunit 1 (442 aa).

The protein belongs to the GcvP family. N-terminal subunit subfamily. The glycine cleavage system is composed of four proteins: P, T, L and H. In this organism, the P 'protein' is a heterodimer of two subunits.

The enzyme catalyses N(6)-[(R)-lipoyl]-L-lysyl-[glycine-cleavage complex H protein] + glycine + H(+) = N(6)-[(R)-S(8)-aminomethyldihydrolipoyl]-L-lysyl-[glycine-cleavage complex H protein] + CO2. Functionally, the glycine cleavage system catalyzes the degradation of glycine. The P protein binds the alpha-amino group of glycine through its pyridoxal phosphate cofactor; CO(2) is released and the remaining methylamine moiety is then transferred to the lipoamide cofactor of the H protein. This is Probable glycine dehydrogenase (decarboxylating) subunit 1 from Phenylobacterium zucineum (strain HLK1).